A 395-amino-acid polypeptide reads, in one-letter code: tRNA-specific 2-thiouridylase MnmA (395 aa).

ATP contacts are provided by residues 6–13 (AMSGGVDS) and L32. C101 functions as the Nucleophile in the catalytic mechanism. C101 and C193 are disulfide-bonded. G125 contacts ATP. The tract at residues 143 to 145 (KDQ) is interaction with tRNA. C193 acts as the Cysteine persulfide intermediate in catalysis.

It belongs to the MnmA/TRMU family.

The protein resides in the cytoplasm. It catalyses the reaction S-sulfanyl-L-cysteinyl-[protein] + uridine(34) in tRNA + AH2 + ATP = 2-thiouridine(34) in tRNA + L-cysteinyl-[protein] + A + AMP + diphosphate + H(+). In terms of biological role, catalyzes the 2-thiolation of uridine at the wobble position (U34) of tRNA, leading to the formation of s(2)U34. The polypeptide is tRNA-specific 2-thiouridylase MnmA (Corynebacterium jeikeium (strain K411)).